The chain runs to 279 residues: uncharacterized protein (279 aa).

Residues 233 to 279 (NDHQLHDSPLCSDVSDSTSNNNYDESLNFSNDNNNSSFNDFDDDNFI) form a disordered region. The segment covering 246–259 (VSDSTSNNNYDESL) has biased composition (polar residues). Residues 260–271 (NFSNDNNNSSFN) show a composition bias toward low complexity.

This is an uncharacterized protein from Buchnera aphidicola subsp. Baizongia pistaciae (strain Bp).